A 275-amino-acid chain; its full sequence is Phosphate import ATP-binding protein PstB (275 aa).

The region spanning 29-270 (VSVRDLNFYY…PTDRRTQDYI (242 aa)) is the ABC transporter domain. An ATP-binding site is contributed by 61–68 (GPSGCGKS).

Belongs to the ABC transporter superfamily. Phosphate importer (TC 3.A.1.7) family. As to quaternary structure, the complex is composed of two ATP-binding proteins (PstB), two transmembrane proteins (PstC and PstA) and a solute-binding protein (PstS).

The protein localises to the cell inner membrane. The catalysed reaction is phosphate(out) + ATP + H2O = ADP + 2 phosphate(in) + H(+). Functionally, part of the ABC transporter complex PstSACB involved in phosphate import. Responsible for energy coupling to the transport system. This Rhodopseudomonas palustris (strain BisB18) protein is Phosphate import ATP-binding protein PstB.